The sequence spans 203 residues: Small ribosomal subunit protein uS4 (203 aa).

One can recognise an S4 RNA-binding domain in the interval 93–153; sequence RRLDNVVYRL…EKSKNLQQVK (61 aa).

Belongs to the universal ribosomal protein uS4 family. Part of the 30S ribosomal subunit. Contacts protein S5. The interaction surface between S4 and S5 is involved in control of translational fidelity.

Its function is as follows. One of the primary rRNA binding proteins, it binds directly to 16S rRNA where it nucleates assembly of the body of the 30S subunit. With S5 and S12 plays an important role in translational accuracy. This Lactobacillus delbrueckii subsp. bulgaricus (strain ATCC 11842 / DSM 20081 / BCRC 10696 / JCM 1002 / NBRC 13953 / NCIMB 11778 / NCTC 12712 / WDCM 00102 / Lb 14) protein is Small ribosomal subunit protein uS4.